Reading from the N-terminus, the 244-residue chain is 1-(5-phosphoribosyl)-5-[(5-phosphoribosylamino)methylideneamino] imidazole-4-carboxamide isomerase (244 aa).

The active-site Proton acceptor is the Asp-8. Catalysis depends on Asp-129, which acts as the Proton donor.

Belongs to the HisA/HisF family.

It localises to the cytoplasm. The catalysed reaction is 1-(5-phospho-beta-D-ribosyl)-5-[(5-phospho-beta-D-ribosylamino)methylideneamino]imidazole-4-carboxamide = 5-[(5-phospho-1-deoxy-D-ribulos-1-ylimino)methylamino]-1-(5-phospho-beta-D-ribosyl)imidazole-4-carboxamide. The protein operates within amino-acid biosynthesis; L-histidine biosynthesis; L-histidine from 5-phospho-alpha-D-ribose 1-diphosphate: step 4/9. The chain is 1-(5-phosphoribosyl)-5-[(5-phosphoribosylamino)methylideneamino] imidazole-4-carboxamide isomerase from Thermodesulfovibrio yellowstonii (strain ATCC 51303 / DSM 11347 / YP87).